The primary structure comprises 187 residues: dTTP/UTP pyrophosphatase (187 aa).

The Proton acceptor role is filled by D72.

The protein belongs to the Maf family. YhdE subfamily. A divalent metal cation is required as a cofactor.

The protein resides in the cytoplasm. The catalysed reaction is dTTP + H2O = dTMP + diphosphate + H(+). The enzyme catalyses UTP + H2O = UMP + diphosphate + H(+). In terms of biological role, nucleoside triphosphate pyrophosphatase that hydrolyzes dTTP and UTP. May have a dual role in cell division arrest and in preventing the incorporation of modified nucleotides into cellular nucleic acids. The polypeptide is dTTP/UTP pyrophosphatase (Vibrio cholerae serotype O1 (strain ATCC 39315 / El Tor Inaba N16961)).